Consider the following 166-residue polypeptide: Large ribosomal subunit protein uL10 (166 aa).

This sequence belongs to the universal ribosomal protein uL10 family. As to quaternary structure, part of the ribosomal stalk of the 50S ribosomal subunit. The N-terminus interacts with L11 and the large rRNA to form the base of the stalk. The C-terminus forms an elongated spine to which L12 dimers bind in a sequential fashion forming a multimeric L10(L12)X complex.

In terms of biological role, forms part of the ribosomal stalk, playing a central role in the interaction of the ribosome with GTP-bound translation factors. This chain is Large ribosomal subunit protein uL10, found in Bacillus cereus (strain G9842).